Consider the following 107-residue polypeptide: MIRILYLLVKPESMSHEQFRKECVVHFQMSAGMPGLHKYEVRLVAGNPTDTHVPYLDVGRIDAIGECWFASEEQYQVYMESDIRKAWFEHGKYFIGQLKPFVTEELV.

His26 (proton donor/acceptor) is an active-site residue. His26 and Tyr39 together coordinate 3-methylmuconolactone. 4-methylmuconolactone is bound by residues His26 and Tyr39.

It belongs to the MmlI family. Homodimer.

The enzyme catalyses 4-methylmuconolactone = 3-methylmuconolactone. Inhibited by p-chloromercuribenzoate. Its function is as follows. Isomerase involved in the degradation of 4-methylsalicylate and 5-methylsalicylate. Catalyzes the isomerization of the dead-end metabolite 4-methylmuconolactone (4-ML) to 3-methylmuconolactone (3-ML), which can then be further degraded through a modified 3-oxoadipate pathway. Can also use 1-methylbislactone but not 3-methyl-cis,cis-muconate. The chain is 4-carboxymethyl-4-methylbutenolide mutase from Pseudomonas reinekei.